The following is a 282-amino-acid chain: Putative phosphoesterase 244L (282 aa).

Asp-45, Asn-80, and His-203 together coordinate a divalent metal cation.

It belongs to the metallophosphoesterase superfamily. IIV-6 244L family.

The chain is Putative phosphoesterase 244L from Invertebrate iridescent virus 6 (IIV-6).